We begin with the raw amino-acid sequence, 327 residues long: Sugar transporter ERD6-like 9 (327 aa).

8 helical membrane-spanning segments follow: residues 26–46 (FLVF…VALG), 68–88 (VFGS…ATIA), 102–122 (VFCI…WLDL), 125–145 (FFVG…IAEI), 152–172 (GTFT…AYYL), 180–200 (IIAL…FFVP), 260–280 (LTIG…GLGY), and 295–315 (IGMT…LILV).

This sequence belongs to the major facilitator superfamily. Sugar transporter (TC 2.A.1.1) family.

The protein resides in the membrane. Its function is as follows. Sugar transporter. The chain is Sugar transporter ERD6-like 9 from Arabidopsis thaliana (Mouse-ear cress).